A 240-amino-acid chain; its full sequence is Coatomer subunit delta (240 aa).

The span at 215 to 226 shows a compositional bias: low complexity; sequence AAAKASSAPKAK. Positions 215–240 are disordered; the sequence is AAAKASSAPKAKGMQLGKKKNTSLLY. Basic residues predominate over residues 231 to 240; the sequence is GKKKNTSLLY.

Belongs to the adaptor complexes medium subunit family. Delta-COP subfamily. Oligomeric complex that consists of at least the alpha, beta, beta', gamma, delta, epsilon and zeta subunits.

Its subcellular location is the cytoplasm. It is found in the nucleus. The coatomer is a cytosolic protein complex that binds to dilysine motifs and reversibly associates with Golgi non-clathrin-coated vesicles, which further mediate biosynthetic protein transport from the ER, via the Golgi up to the trans Golgi network. Coatomer complex is required for budding from Golgi membranes, and is essential for the retrograde Golgi-to-ER transport of dilysine-tagged proteins. This chain is Coatomer subunit delta (ret2), found in Schizosaccharomyces pombe (strain 972 / ATCC 24843) (Fission yeast).